The chain runs to 1188 residues: Integrin alpha-11 (1188 aa).

Residues 1–22 (MDFPRGLLVAWTLSLWPGFTDT) form the signal peptide. Residues 23–1141 (FNMDTRNPRV…ISKQEDWQVP (1119 aa)) are Extracellular-facing. 2 FG-GAP repeats span residues 24–85 (NMDT…NCTK) and 91–151 (VTLS…FSKT). A disulfide bridge connects residues Cys76 and Cys83. Asn82 and Asn95 each carry an N-linked (GlcNAc...) asparagine glycan. 2 disulfides stabilise this stretch: Cys121/Cys139 and Cys129/Cys159. The VWFA domain occupies 164–345 (DIVIVLDGSN…AALKDIVDAL (182 aa)). N-linked (GlcNAc...) asparagine glycosylation is found at Asn291, Asn331, Asn358, Asn449, and Asn462. FG-GAP repeat units follow at residues 355–406 (TNKN…VIPH), 411–461 (LKEF…SMHN), 462–527 (NRSL…RFVY), 528–586 (NGTL…NILK), and 590–650 (QRIT…FEPS). Ca(2+) contacts are provided by Asp488, Asn490, Asp492, and Asp496. Asn528 is a glycosylation site (N-linked (GlcNAc...) asparagine). Residues Asp551, Asn553, Asp555, Asp559, Asp613, Asn615, Asp617, and Asp621 each contribute to the Ca(2+) site. Asn642 carries an N-linked (GlcNAc...) asparagine glycan. 3 cysteine pairs are disulfide-bonded: Cys659-Cys668, Cys674-Cys729, and Cys781-Cys787. N-linked (GlcNAc...) asparagine glycosylation is present at Asn694. A glycan (N-linked (GlcNAc...) asparagine) is linked at Asn857. A disulfide bridge links Cys881 with Cys893. 5 N-linked (GlcNAc...) asparagine glycosylation sites follow: Asn894, Asn973, Asn1031, Asn1039, and Asn1059. The helical transmembrane segment at 1142 to 1164 (IWIIVGSTLGGLLLLALLVLALW) threads the bilayer. Topologically, residues 1165–1188 (KLGFFKSAKRKREPGLGPIPKELK) are cytoplasmic.

This sequence belongs to the integrin alpha chain family. As to quaternary structure, heterodimer of an alpha and a beta subunit. Alpha-11 associates with beta-1. Interacts with RAB21.

It is found in the membrane. In terms of biological role, integrin alpha-11/beta-1 is a receptor for collagen. In Mus musculus (Mouse), this protein is Integrin alpha-11 (Itga11).